The primary structure comprises 406 residues: uncharacterized protein (406 aa).

The protein localises to the plastid. Its subcellular location is the chloroplast. This is an uncharacterized protein from Euglena gracilis.